A 302-amino-acid chain; its full sequence is 3-methyl-2-oxobutanoate hydroxymethyltransferase 1 (302 aa).

Mg(2+)-binding residues include Asp75 and Asp118. 3-methyl-2-oxobutanoate-binding positions include 75-76 (DS), Asp118, and Lys147. Residue Glu149 participates in Mg(2+) binding. The active-site Proton acceptor is Glu217.

The protein belongs to the PanB family. In terms of assembly, homodecamer; pentamer of dimers. It depends on Mg(2+) as a cofactor.

The protein resides in the cytoplasm. It carries out the reaction 3-methyl-2-oxobutanoate + (6R)-5,10-methylene-5,6,7,8-tetrahydrofolate + H2O = 2-dehydropantoate + (6S)-5,6,7,8-tetrahydrofolate. Its pathway is cofactor biosynthesis; (R)-pantothenate biosynthesis; (R)-pantoate from 3-methyl-2-oxobutanoate: step 1/2. Functionally, catalyzes the reversible reaction in which hydroxymethyl group from 5,10-methylenetetrahydrofolate is transferred onto alpha-ketoisovalerate to form ketopantoate. The protein is 3-methyl-2-oxobutanoate hydroxymethyltransferase 1 of Zymomonas mobilis subsp. mobilis (strain ATCC 31821 / ZM4 / CP4).